Here is a 526-residue protein sequence, read N- to C-terminus: Zinc finger protein 69 homolog (526 aa).

The SCAN box domain occupies M1–F39. One can recognise a KRAB domain in the interval L76–S147. 9 C2H2-type zinc fingers span residues Y271–H293, F299–H321, F327–H349, Y355–H377, F383–H405, Y411–H433, Y439–H461, Y467–H489, and Y495–H517.

It belongs to the krueppel C2H2-type zinc-finger protein family. Expressed in visceral and subcutaneous adipose tissue.

The protein resides in the nucleus. In terms of biological role, putative transcription factor that appears to regulate lipid metabolism. The sequence is that of Zinc finger protein 69 homolog (ZFP69) from Homo sapiens (Human).